Consider the following 39-residue polypeptide: U1-nemetoxin-Csp1c (39 aa).

Disulfide bonds link cysteine 1-cysteine 15, cysteine 8-cysteine 19, cysteine 14-cysteine 36, and cysteine 25-cysteine 32.

Expressed by the venom gland.

The protein localises to the secreted. In terms of biological role, causes paralysis to insect larvae (H.virescens). This toxin is active only on insects. In Calisoga sp. (Spider), this protein is U1-nemetoxin-Csp1c.